Here is a 187-residue protein sequence, read N- to C-terminus: Large ribosomal subunit protein uL5 (187 aa).

The protein belongs to the universal ribosomal protein uL5 family. In terms of assembly, part of the 50S ribosomal subunit; part of the 5S rRNA/L5/L18/L25 subcomplex. Contacts the 5S rRNA and the P site tRNA. Forms a bridge to the 30S subunit in the 70S ribosome.

This is one of the proteins that bind and probably mediate the attachment of the 5S RNA into the large ribosomal subunit, where it forms part of the central protuberance. In the 70S ribosome it contacts protein S13 of the 30S subunit (bridge B1b), connecting the 2 subunits; this bridge is implicated in subunit movement. Contacts the P site tRNA; the 5S rRNA and some of its associated proteins might help stabilize positioning of ribosome-bound tRNAs. This Mycolicibacterium paratuberculosis (strain ATCC BAA-968 / K-10) (Mycobacterium paratuberculosis) protein is Large ribosomal subunit protein uL5.